We begin with the raw amino-acid sequence, 1061 residues long: Eukaryotic translation initiation factor 3 subunit A (1061 aa).

Over residues 114-126 (QSSIEATTGSSSV) the composition is skewed to polar residues. Positions 114–133 (QSSIEATTGSSSVEDLEASE) are disordered. Positions 339–523 (LQKAATFVVL…GVLSFDVDVF (185 aa)) constitute a PCI domain. Coiled-coil stretches lie at residues 609–724 (EVIQ…KRLD) and 789–906 (RADL…AAAA). A compositionally biased stretch (basic and acidic residues) spans 828-901 (REKREREEKE…EAMARRRAEK (74 aa)). Positions 828-1061 (REKREREEKE…KYVPKFRREG (234 aa)) are disordered. 2 stretches are compositionally biased toward pro residues: residues 950–962 (SGPP…PPPI) and 1000–1011 (APPPERSGPPPR).

It belongs to the eIF-3 subunit A family. Component of the eukaryotic translation initiation factor 3 (eIF-3) complex.

It is found in the cytoplasm. Its function is as follows. RNA-binding component of the eukaryotic translation initiation factor 3 (eIF-3) complex, which is involved in protein synthesis of a specialized repertoire of mRNAs and, together with other initiation factors, stimulates binding of mRNA and methionyl-tRNAi to the 40S ribosome. The eIF-3 complex specifically targets and initiates translation of a subset of mRNAs involved in cell proliferation. This Chaetomium globosum (strain ATCC 6205 / CBS 148.51 / DSM 1962 / NBRC 6347 / NRRL 1970) (Soil fungus) protein is Eukaryotic translation initiation factor 3 subunit A.